Reading from the N-terminus, the 534-residue chain is Putative ammonium transporter 1 (534 aa).

Transmembrane regions (helical) follow at residues 31–51 (SFFLCSMALIIFFMQCGFAYL), 69–89 (LLDSCICIIGYWAIGWALAYG), 115–135 (FFFQYVFSATAATIVSGAVAE), 139–159 (FITYVTYCTVISTFIYPVLTH), 184–204 (FAGSGLVHLCGGSISFLAAWI), 223–243 (ILGHSVPFTALGGFILMFGFL), 263–283 (ALAMINTILSGAFAALIYLGV), 291–311 (WTLLLTINACLSGMVAACAGC), 318–338 (ACIWVGLGAGLIYLAFSKLMI), 346–366 (LDAFAVHAGGGFWGLMSSSII), and 401–421 (ICALAIIAWSLGVMLPIFWIL).

This sequence belongs to the ammonia transporter channel (TC 1.A.11.2) family.

It localises to the membrane. Its function is as follows. Involved in the uptake of ammonia. The protein is Putative ammonium transporter 1 (amt-1) of Caenorhabditis elegans.